Reading from the N-terminus, the 364-residue chain is Histidinol-phosphate aminotransferase (364 aa).

Lys-222 is subject to N6-(pyridoxal phosphate)lysine.

It belongs to the class-II pyridoxal-phosphate-dependent aminotransferase family. Histidinol-phosphate aminotransferase subfamily. As to quaternary structure, homodimer. Pyridoxal 5'-phosphate is required as a cofactor.

It catalyses the reaction L-histidinol phosphate + 2-oxoglutarate = 3-(imidazol-4-yl)-2-oxopropyl phosphate + L-glutamate. It functions in the pathway amino-acid biosynthesis; L-histidine biosynthesis; L-histidine from 5-phospho-alpha-D-ribose 1-diphosphate: step 7/9. This Brevibacillus brevis (strain 47 / JCM 6285 / NBRC 100599) protein is Histidinol-phosphate aminotransferase.